Here is a 174-residue protein sequence, read N- to C-terminus: Serine protease 2 (174 aa).

A disulfide bridge connects residues cysteine 15 and cysteine 36. Residues histidine 35, aspartate 65, and serine 147 each act as charge relay system in the active site. Cysteine 141 and cysteine 168 form a disulfide bridge.

The protein belongs to the peptidase S1 family.

The protein resides in the secreted. Its function is as follows. Broad substrate specificity. The polypeptide is Serine protease 2 (Streptomyces fradiae (Streptomyces roseoflavus)).